Reading from the N-terminus, the 298-residue chain is Foldase protein PrsA 1 (298 aa).

A signal peptide spans 1–19; that stretch reads MKKWLIALAGVLLTFTLAG. Cysteine 20 is lipidated: N-palmitoyl cysteine. Cysteine 20 carries the S-diacylglycerol cysteine lipid modification. The region spanning 136–232 is the PpiC domain; it reads EPKVTVQHIL…NGYEIIRMIK (97 aa).

It belongs to the PrsA family.

The protein localises to the cell membrane. It carries out the reaction [protein]-peptidylproline (omega=180) = [protein]-peptidylproline (omega=0). Functionally, plays a major role in protein secretion by helping the post-translocational extracellular folding of several secreted proteins. The polypeptide is Foldase protein PrsA 1 (prsA1) (Lactiplantibacillus plantarum (strain ATCC BAA-793 / NCIMB 8826 / WCFS1) (Lactobacillus plantarum)).